The following is a 738-amino-acid chain: Glycogen [starch] synthase, muscle (738 aa).

S8 is modified (phosphoserine; by AMPK and PKA). S11 carries the post-translational modification Phosphoserine. K39 lines the UDP pocket. The UDP-alpha-D-glucose site is built by H205 and R211. Alpha-D-glucose 6-phosphate contacts are provided by H291, E292, Q294, H297, and K301. R331 contributes to the UDP binding site. UDP-alpha-D-glucose is bound at residue R331. At S412 the chain carries Phosphoserine. H501 is an alpha-D-glucose 6-phosphate binding site. Positions 510, 512, and 513 each coordinate UDP-alpha-D-glucose. Residue T515 coordinates UDP. Residues R582 and R586 each contribute to the alpha-D-glucose 6-phosphate site. A disordered region spans residues 632 to 738 (QGYRYPRPAS…PTSSLGEERN (107 aa)). S641 carries the post-translational modification Phosphoserine; by DYRK2, GSK3-alpha, GSK3-beta and PASK. S645, S649, S652, S653, S657, and S672 each carry phosphoserine. A compositionally biased stretch (acidic residues) spans 658–681 (EDEEEPRDGPLGEDSERYDEEEEA). A compositionally biased stretch (basic and acidic residues) spans 682 to 695 (AKDRRNIRAPEWPR). Residues S698, S709, and S711 each carry the phosphoserine modification. Residues 698–738 (SCSSSTGGSKRSNSVDTGPSSSLSTPTEPLSPTSSLGEERN) show a composition bias toward low complexity. Phosphothreonine is present on residues T722 and T724. 2 positions are modified to phosphoserine: S728 and S732.

Belongs to the glycosyltransferase 3 family. As to quaternary structure, part of the GYS1-GYG1 complex, a heterooctamer composed of a tetramer of GYS1 and 2 dimers of GYG1, where each GYS1 protomer binds to one GYG1 subunit (via GYG1 C-terminus); the GYS1 tetramer may dissociate from GYG1 dimers to continue glycogen polymerization on its own. Post-translationally, primed phosphorylation at Ser-657 (site 5) by CSNK2A1 and CSNK2A2 is required for inhibitory phosphorylation at Ser-641 (site 3a), Ser-645 (site 3b), Ser-649 (site 3c) and Ser-653 (site 4) by GSK3A an GSK3B. Phosphorylated at Ser-641 by PASK, leading to inactivation; phosphorylation by PASK is inhibited by glycogen. Phosphorylated at Ser-641 by DYRK2, leading to inactivation. Dephosphorylation at Ser-641 and Ser-645 by PP1 activates the enzyme. Phosphorylation at Ser-8 by AMPK inactivates the enzyme activity.

It catalyses the reaction [(1-&gt;4)-alpha-D-glucosyl](n) + UDP-alpha-D-glucose = [(1-&gt;4)-alpha-D-glucosyl](n+1) + UDP + H(+). The protein operates within glycan biosynthesis; glycogen biosynthesis. With respect to regulation, allosteric activation by glucose-6-phosphate. Phosphorylation reduces the activity towards UDP-glucose. When in the non-phosphorylated state, glycogen synthase does not require glucose-6-phosphate as an allosteric activator; when phosphorylated it does. Its function is as follows. Glycogen synthase participates in the glycogen biosynthetic process along with glycogenin and glycogen branching enzyme. Extends the primer composed of a few glucose units formed by glycogenin by adding new glucose units to it. In this context, glycogen synthase transfers the glycosyl residue from UDP-Glc to the non-reducing end of alpha-1,4-glucan. The protein is Glycogen [starch] synthase, muscle (Gys1) of Mus musculus (Mouse).